Consider the following 261-residue polypeptide: 8-demethyl-8-(2,3-dimethoxy-alpha-L-rhamnosyl)-tetracenomycin-C 4'-O-methyltransferase (261 aa).

Residues 53–54, 81–85, 111–115, F167, 185–186, and S191 each bind S-adenosyl-L-methionine; these read TM, ETGVW, DSFEG, and DG. D185 is a binding site for Mg(2+). Mg(2+) contacts are provided by D212 and D213.

The protein belongs to the methyltransferase TylF/MycF family. The cofactor is Mg(2+).

It catalyses the reaction 8-demethyl-8-(2,3-di-O-methyl-alpha-L-rhamnosyl)-tetracenomycin C + S-adenosyl-L-methionine = 8-demethyl-8-(2,3,4-tri-O-methyl-alpha-L-rhamnosyl)-tetracenomycin C + S-adenosyl-L-homocysteine + H(+). It functions in the pathway antibiotic biosynthesis. Functionally, O-methyltransferase involved in the biosynthesis of the permethylated L-rhamnose moiety of elloramycin, an antitumor polyketide. Mediates the methylation of the hydroxy groups at the 4'-position after the sugar moiety has been attached to the aglycon. The protein is 8-demethyl-8-(2,3-dimethoxy-alpha-L-rhamnosyl)-tetracenomycin-C 4'-O-methyltransferase of Streptomyces olivaceus.